A 238-amino-acid chain; its full sequence is Uridylate kinase (238 aa).

ATP is bound at residue 12-15; it reads KLSG. Gly-54 provides a ligand contact to UMP. Residues Gly-55 and Arg-59 each coordinate ATP. UMP is bound by residues Asp-74 and 135 to 142; that span reads TGNPYFTT. Positions 162, 163, 168, and 171 each coordinate ATP.

The protein belongs to the UMP kinase family. As to quaternary structure, homohexamer.

The protein localises to the cytoplasm. It catalyses the reaction UMP + ATP = UDP + ADP. Its pathway is pyrimidine metabolism; CTP biosynthesis via de novo pathway; UDP from UMP (UMPK route): step 1/1. Its activity is regulated as follows. Inhibited by UTP. Catalyzes the reversible phosphorylation of UMP to UDP. This chain is Uridylate kinase, found in Bradyrhizobium sp. (strain BTAi1 / ATCC BAA-1182).